A 360-amino-acid chain; its full sequence is Phosphoserine aminotransferase (360 aa).

Arginine 41 serves as a coordination point for L-glutamate. Residues 75 to 76 (AS), tryptophan 101, threonine 151, aspartate 171, and glutamine 194 contribute to the pyridoxal 5'-phosphate site. Lysine 195 carries the post-translational modification N6-(pyridoxal phosphate)lysine. 236–237 (NT) lines the pyridoxal 5'-phosphate pocket.

Belongs to the class-V pyridoxal-phosphate-dependent aminotransferase family. SerC subfamily. Homodimer. Pyridoxal 5'-phosphate is required as a cofactor.

It localises to the cytoplasm. The catalysed reaction is O-phospho-L-serine + 2-oxoglutarate = 3-phosphooxypyruvate + L-glutamate. It catalyses the reaction 4-(phosphooxy)-L-threonine + 2-oxoglutarate = (R)-3-hydroxy-2-oxo-4-phosphooxybutanoate + L-glutamate. Its pathway is amino-acid biosynthesis; L-serine biosynthesis; L-serine from 3-phospho-D-glycerate: step 2/3. The protein operates within cofactor biosynthesis; pyridoxine 5'-phosphate biosynthesis; pyridoxine 5'-phosphate from D-erythrose 4-phosphate: step 3/5. Functionally, catalyzes the reversible conversion of 3-phosphohydroxypyruvate to phosphoserine and of 3-hydroxy-2-oxo-4-phosphonooxybutanoate to phosphohydroxythreonine. In Herpetosiphon aurantiacus (strain ATCC 23779 / DSM 785 / 114-95), this protein is Phosphoserine aminotransferase.